Consider the following 345-residue polypeptide: Transcription initiation factor IIB (345 aa).

The TFIIB-type zinc finger occupies 8-40 (VGRNCPHCSAVDSLQTDDVMGEVACTACALVVA). Residues Cys12, Cys15, Cys32, and Cys35 each contribute to the Zn(2+) site. Disordered stretches follow at residues 59–89 (DVDH…HMSS) and 318–345 (PTAG…REET). Over residues 71–83 (TAATSAAGSLSAA) the composition is skewed to low complexity.

It belongs to the TFIIB family. In terms of assembly, monomer. Interacts with RNA polymerase II subunits RPB1 and RPB2. Interacts with TBP; the interaction is direct.

The protein resides in the nucleus. Its function is as follows. Specifically binds to the promoter of the spliced leader (SL) RNA gene and thus is essential for SLRNA transcription. In Trypanosoma brucei brucei, this protein is Transcription initiation factor IIB.